We begin with the raw amino-acid sequence, 87 residues long: Small ribosomal subunit protein bS20 (87 aa).

The segment covering methionine 1–alanine 11 has biased composition (basic residues). The disordered stretch occupies residues methionine 1–serine 26.

The protein belongs to the bacterial ribosomal protein bS20 family.

Functionally, binds directly to 16S ribosomal RNA. The chain is Small ribosomal subunit protein bS20 from Actinobacillus pleuropneumoniae serotype 5b (strain L20).